We begin with the raw amino-acid sequence, 146 residues long: Large ribosomal subunit protein uL11 (146 aa).

The protein belongs to the universal ribosomal protein uL11 family. In terms of assembly, part of the ribosomal stalk of the 50S ribosomal subunit. Interacts with L10 and the large rRNA to form the base of the stalk. L10 forms an elongated spine to which L12 dimers bind in a sequential fashion forming a multimeric L10(L12)X complex. Post-translationally, one or more lysine residues are methylated.

In terms of biological role, forms part of the ribosomal stalk which helps the ribosome interact with GTP-bound translation factors. This is Large ribosomal subunit protein uL11 from Blochmanniella floridana.